Here is a 721-residue protein sequence, read N- to C-terminus: Polyribonucleotide nucleotidyltransferase (721 aa).

Positions 490 and 496 each coordinate Mg(2+). Residues 557–623 (PRIISIKINP…RIAGLTKEAK (67 aa)) enclose the KH domain. In terms of domain architecture, S1 motif spans 625-693 (GEEYEGTVVK…DRGKIDLIRP (69 aa)). Positions 693–721 (PELEGKIAPREPRAPRGGGDRGPRPPRRD) are disordered.

The protein belongs to the polyribonucleotide nucleotidyltransferase family. Requires Mg(2+) as cofactor.

The protein localises to the cytoplasm. It carries out the reaction RNA(n+1) + phosphate = RNA(n) + a ribonucleoside 5'-diphosphate. Its function is as follows. Involved in mRNA degradation. Catalyzes the phosphorolysis of single-stranded polyribonucleotides processively in the 3'- to 5'-direction. In Deinococcus deserti (strain DSM 17065 / CIP 109153 / LMG 22923 / VCD115), this protein is Polyribonucleotide nucleotidyltransferase.